Here is a 211-residue protein sequence, read N- to C-terminus: uncharacterized protein (211 aa).

2 disordered regions span residues 1-73 and 96-123; these read MLRR…SKLK and TNAA…ASLS. Composition is skewed to polar residues over residues 26 to 35 and 53 to 62; these read SKSSLISLTS and APSQFLSPTN. Low complexity predominate over residues 63 to 73; sequence KRSTSSQSKLK. S182 is subject to Phosphoserine. T184 is modified (phosphothreonine). S186 carries the phosphoserine modification.

This is an uncharacterized protein from Saccharomyces cerevisiae (strain ATCC 204508 / S288c) (Baker's yeast).